The chain runs to 425 residues: Histidine--tRNA ligase (425 aa).

The protein belongs to the class-II aminoacyl-tRNA synthetase family. Homodimer.

The protein localises to the cytoplasm. It catalyses the reaction tRNA(His) + L-histidine + ATP = L-histidyl-tRNA(His) + AMP + diphosphate + H(+). This chain is Histidine--tRNA ligase, found in Pelotomaculum thermopropionicum (strain DSM 13744 / JCM 10971 / SI).